A 137-amino-acid chain; its full sequence is Large ribosomal subunit protein uL16c (137 aa).

The protein belongs to the universal ribosomal protein uL16 family. Part of the 50S ribosomal subunit.

The protein resides in the plastid. In Cuscuta exaltata (Tall dodder), this protein is Large ribosomal subunit protein uL16c.